Reading from the N-terminus, the 120-residue chain is Large ribosomal subunit protein bL12 (120 aa).

This sequence belongs to the bacterial ribosomal protein bL12 family. In terms of assembly, homodimer. Part of the ribosomal stalk of the 50S ribosomal subunit. Forms a multimeric L10(L12)X complex, where L10 forms an elongated spine to which 2 to 4 L12 dimers bind in a sequential fashion. Binds GTP-bound translation factors.

Forms part of the ribosomal stalk which helps the ribosome interact with GTP-bound translation factors. Is thus essential for accurate translation. This Listeria monocytogenes serotype 4b (strain CLIP80459) protein is Large ribosomal subunit protein bL12.